The chain runs to 238 residues: Probable transcriptional regulatory protein TC_0742 (238 aa).

The interval 1 to 21 (MAGHSKWANTKHRKERADHKK) is disordered. Positions 9-21 (NTKHRKERADHKK) are enriched in basic residues.

It belongs to the TACO1 family.

The protein localises to the cytoplasm. The sequence is that of Probable transcriptional regulatory protein TC_0742 from Chlamydia muridarum (strain MoPn / Nigg).